Consider the following 429-residue polypeptide: Histidine--tRNA ligase (429 aa).

It belongs to the class-II aminoacyl-tRNA synthetase family. In terms of assembly, homodimer.

It is found in the cytoplasm. It catalyses the reaction tRNA(His) + L-histidine + ATP = L-histidyl-tRNA(His) + AMP + diphosphate + H(+). This is Histidine--tRNA ligase from Pseudomonas putida (strain GB-1).